Reading from the N-terminus, the 450-residue chain is Chromosomal replication initiator protein DnaA (450 aa).

The segment at 1-84 (MENIHDLWDR…AVKFIIPPNQ (84 aa)) is domain I, interacts with DnaA modulators. The tract at residues 84–111 (QADEKLELPSSAKKQRKPYEEANDFPQS) is domain II. The segment at 112–328 (MLNPKYTFDT…GALIRVVAYS (217 aa)) is domain III, AAA+ region. ATP-binding residues include glycine 156, glycine 158, lysine 159, and threonine 160. Residues 329–450 (SLINKEITAD…KEIQEKLKQL (122 aa)) are domain IV, binds dsDNA.

It belongs to the DnaA family. In terms of assembly, oligomerizes as a right-handed, spiral filament on DNA at oriC.

The protein resides in the cytoplasm. Plays an essential role in the initiation and regulation of chromosomal replication. ATP-DnaA binds to the origin of replication (oriC) to initiate formation of the DNA replication initiation complex once per cell cycle. Binds the DnaA box (a 9 base pair repeat at the origin) and separates the double-stranded (ds)DNA. Forms a right-handed helical filament on oriC DNA; dsDNA binds to the exterior of the filament while single-stranded (ss)DNA is stabiized in the filament's interior. The ATP-DnaA-oriC complex binds and stabilizes one strand of the AT-rich DNA unwinding element (DUE), permitting loading of DNA polymerase. After initiation quickly degrades to an ADP-DnaA complex that is not apt for DNA replication. Binds acidic phospholipids. This Geobacillus thermodenitrificans (strain NG80-2) protein is Chromosomal replication initiator protein DnaA.